The chain runs to 207 residues: Ribosomal RNA small subunit methyltransferase G (207 aa).

S-adenosyl-L-methionine contacts are provided by residues Gly73, Leu78, 124-125 (VE), and Arg139.

This sequence belongs to the methyltransferase superfamily. RNA methyltransferase RsmG family.

The protein resides in the cytoplasm. The enzyme catalyses guanosine(527) in 16S rRNA + S-adenosyl-L-methionine = N(7)-methylguanosine(527) in 16S rRNA + S-adenosyl-L-homocysteine. In terms of biological role, specifically methylates the N7 position of guanine in position 527 of 16S rRNA. In Enterobacter sp. (strain 638), this protein is Ribosomal RNA small subunit methyltransferase G.